Consider the following 388-residue polypeptide: Succinate--CoA ligase [ADP-forming] subunit beta (388 aa).

An ATP-grasp domain is found at 9-244; it reads KQLFAEYGLP…PSQDDPREAH (236 aa). ATP is bound by residues K46, 53 to 55, E99, T102, and E107; that span reads GRG. 2 residues coordinate Mg(2+): N199 and D213. Substrate-binding positions include N264 and 321 to 323; that span reads GIV.

This sequence belongs to the succinate/malate CoA ligase beta subunit family. Heterotetramer of two alpha and two beta subunits. The cofactor is Mg(2+).

The enzyme catalyses succinate + ATP + CoA = succinyl-CoA + ADP + phosphate. It catalyses the reaction GTP + succinate + CoA = succinyl-CoA + GDP + phosphate. Its pathway is carbohydrate metabolism; tricarboxylic acid cycle; succinate from succinyl-CoA (ligase route): step 1/1. Succinyl-CoA synthetase functions in the citric acid cycle (TCA), coupling the hydrolysis of succinyl-CoA to the synthesis of either ATP or GTP and thus represents the only step of substrate-level phosphorylation in the TCA. The beta subunit provides nucleotide specificity of the enzyme and binds the substrate succinate, while the binding sites for coenzyme A and phosphate are found in the alpha subunit. The polypeptide is Succinate--CoA ligase [ADP-forming] subunit beta (Pseudomonas syringae pv. syringae (strain B728a)).